The chain runs to 808 residues: Transcription activator of gluconeogenesis PAAG_01030 (808 aa).

The segment at 1 to 90 (MTSSVRNGSP…SAKDPLRPRR (90 aa)) is disordered. Over residues 69–83 (STSSTAASANNASAK) the composition is skewed to low complexity. Positions 97-125 (CFACQRAHLTCGDERPCQRCIKRGLQDTC) form a DNA-binding region, zn(2)-C6 fungal-type. Residues 158–170 (AARNKVNSNSQQR) are compositionally biased toward polar residues. 5 disordered regions span residues 158 to 203 (AARN…FSTP), 236 to 285 (SAFQ…YGST), 322 to 387 (GAGD…IYNQ), 442 to 461 (PPTNTQHQQQPQPPRISTPS), and 598 to 629 (TGGSSSSGVSSRGSSTYNSRNSATTTVMDNQS). Over residues 171-188 (NGTNSNSDNNSTNTNSNN) the composition is skewed to low complexity. Polar residues-rich tracts occupy residues 189–203 (KPSHQDVSTNFFSTP), 248–279 (FDLSSNPQNHTLSPSIAQNSGTTPSSSASQNP), 339–359 (GRSSGTFTVQNFGEGSSNQSP), and 377–387 (GPTNPRNIYNQ). Low complexity-rich tracts occupy residues 442–451 (PPTNTQHQQQ) and 598–619 (TGGSSSSGVSSRGSSTYNSRNS). The span at 620–629 (ATTTVMDNQS) shows a compositional bias: polar residues.

Belongs to the ERT1/acuK family.

It localises to the nucleus. Functionally, transcription factor which regulates nonfermentable carbon utilization. Activator of gluconeogenetic genes. This chain is Transcription activator of gluconeogenesis PAAG_01030, found in Paracoccidioides lutzii (strain ATCC MYA-826 / Pb01) (Paracoccidioides brasiliensis).